Consider the following 119-residue polypeptide: Holo-[acyl-carrier-protein] synthase (119 aa).

Residues aspartate 8 and glutamate 58 each coordinate Mg(2+).

The protein belongs to the P-Pant transferase superfamily. AcpS family. The cofactor is Mg(2+).

It localises to the cytoplasm. The catalysed reaction is apo-[ACP] + CoA = holo-[ACP] + adenosine 3',5'-bisphosphate + H(+). Functionally, transfers the 4'-phosphopantetheine moiety from coenzyme A to a Ser of acyl-carrier-protein. The sequence is that of Holo-[acyl-carrier-protein] synthase from Bacillus thuringiensis subsp. konkukian (strain 97-27).